The following is a 485-amino-acid chain: 28S rRNA (uridine-N(3))-methyltransferase (485 aa).

S-adenosyl-L-methionine-binding residues include Arg296, Gly318, and Asn347.

The protein belongs to the class IV-like SAM-binding methyltransferase superfamily.

Its subcellular location is the nucleus. The enzyme catalyses uridine in 28S rRNA + S-adenosyl-L-methionine = N(3)-methyluridine in 28S rRNA + S-adenosyl-L-homocysteine + H(+). Its function is as follows. S-adenosyl-L-methionine-dependent methyltransferase that specifically methylates the uridine in position 3485 of 28S rRNA. This is 28S rRNA (uridine-N(3))-methyltransferase from Drosophila melanogaster (Fruit fly).